A 448-amino-acid polypeptide reads, in one-letter code: Bifunctional protein GlmU (448 aa).

The pyrophosphorylase stretch occupies residues 1 to 230 (MRSCLSIVLA…FDNIVGINNC (230 aa)). UDP-N-acetyl-alpha-D-glucosamine-binding positions include 9 to 12 (LAAG), K23, Q76, and 81 to 82 (GT). Mg(2+) is bound at residue D106. UDP-N-acetyl-alpha-D-glucosamine is bound by residues G142, E156, N171, and N228. N228 provides a ligand contact to Mg(2+). The interval 231 to 251 (FELFEADSLWQKRKARDLMLS) is linker. The N-acetyltransferase stretch occupies residues 252–448 (GVTILKPETV…VRLSGNQQKK (197 aa)). UDP-N-acetyl-alpha-D-glucosamine is bound by residues R317 and K335. H347 (proton acceptor) is an active-site residue. UDP-N-acetyl-alpha-D-glucosamine is bound by residues Y350 and N361. Residues A364, 370-371 (NY), S389, S407, and R424 contribute to the acetyl-CoA site.

In the N-terminal section; belongs to the N-acetylglucosamine-1-phosphate uridyltransferase family. It in the C-terminal section; belongs to the transferase hexapeptide repeat family. As to quaternary structure, homotrimer. It depends on Mg(2+) as a cofactor.

The protein resides in the cytoplasm. It catalyses the reaction alpha-D-glucosamine 1-phosphate + acetyl-CoA = N-acetyl-alpha-D-glucosamine 1-phosphate + CoA + H(+). The enzyme catalyses N-acetyl-alpha-D-glucosamine 1-phosphate + UTP + H(+) = UDP-N-acetyl-alpha-D-glucosamine + diphosphate. The protein operates within nucleotide-sugar biosynthesis; UDP-N-acetyl-alpha-D-glucosamine biosynthesis; N-acetyl-alpha-D-glucosamine 1-phosphate from alpha-D-glucosamine 6-phosphate (route II): step 2/2. Its pathway is nucleotide-sugar biosynthesis; UDP-N-acetyl-alpha-D-glucosamine biosynthesis; UDP-N-acetyl-alpha-D-glucosamine from N-acetyl-alpha-D-glucosamine 1-phosphate: step 1/1. It participates in bacterial outer membrane biogenesis; LPS lipid A biosynthesis. Its function is as follows. Catalyzes the last two sequential reactions in the de novo biosynthetic pathway for UDP-N-acetylglucosamine (UDP-GlcNAc). The C-terminal domain catalyzes the transfer of acetyl group from acetyl coenzyme A to glucosamine-1-phosphate (GlcN-1-P) to produce N-acetylglucosamine-1-phosphate (GlcNAc-1-P), which is converted into UDP-GlcNAc by the transfer of uridine 5-monophosphate (from uridine 5-triphosphate), a reaction catalyzed by the N-terminal domain. The polypeptide is Bifunctional protein GlmU (Bartonella quintana (strain Toulouse) (Rochalimaea quintana)).